A 1085-amino-acid chain; its full sequence is Ankyrin repeat and IBR domain-containing protein 1 (1085 aa).

Glycine 2 is lipidated: N-myristoyl glycine. ANK repeat units follow at residues 45-75 (QHNTPLHYAARHGMNRILGTFLFGRDGNPNK) and 145-174 (KKNTPLHYAAASGMKACVELLVKHGGDLFA). Residues 282–322 (CQRSGVQMPTPPPSGYNAWDTLPSPRTPRTTRSSVTSPDEI) are disordered. Over residues 304–319 (PSPRTPRTTRSSVTSP) the composition is skewed to low complexity. The segment at 330–570 (DTSLCDICMC…GGYYRCTRYE (241 aa)) is TRIAD supradomain. Residues cysteine 334, cysteine 337, cysteine 352, histidine 354, cysteine 357, cysteine 360, cysteine 379, cysteine 384, cysteine 466, cysteine 469, histidine 474, cysteine 479, cysteine 520, and cysteine 523 each coordinate Zn(2+). Residues 334–384 (CDICMCSISVFEDPVDMPCGHDFCRGCWEAFLNLKIQEGEAHNIFCPAYEC) form an RING-type 1 zinc finger. An IBR-type zinc finger spans residues 402-479 (DKRYLQFDIK…LGEAHEPCDC (78 aa)). An RING-type 2; atypical zinc finger spans residues 520 to 549 (CANCKSPIQKNEGCNHMQCAKCKYDFCWIC). Cysteine 533 is a catalytic residue. Zn(2+) contacts are provided by cysteine 538, cysteine 541, cysteine 546, cysteine 549, histidine 556, and cysteine 566. The stretch at 576 to 641 (EEQSKEMTVE…RALKETEGGC (66 aa)) forms a coiled coil. Serine 738 is modified (phosphoserine). Positions 764–808 (RRRHRQQRRRGDVHSLLSNPTDLDEPSESTFDLPEGSSGRRPGAS) are disordered. In terms of domain architecture, UIM spans 846–865 (EDDPNILLAIQLSLQESGLD). 2 positions are modified to phosphoserine: serine 879 and serine 906. 3 disordered regions span residues 884–907 (GSSLPSRLDSVPRSTESPRAALSS), 921–959 (GADSDPFSTDTLSSRPLSETRSDFCPSSSDLDSAGQDPS), and 1014–1085 (PPED…VHSV). Residues 926–959 (PFSTDTLSSRPLSETRSDFCPSSSDLDSAGQDPS) show a composition bias toward polar residues. The segment covering 1018 to 1033 (SVSKDTGVHEGERAQM) has biased composition (basic and acidic residues). The span at 1068–1085 (ASQTPQTSSDWLEQVHSV) shows a compositional bias: polar residues.

Belongs to the RBR family.

The catalysed reaction is [E2 ubiquitin-conjugating enzyme]-S-ubiquitinyl-L-cysteine + [acceptor protein]-L-lysine = [E2 ubiquitin-conjugating enzyme]-L-cysteine + [acceptor protein]-N(6)-ubiquitinyl-L-lysine.. Functionally, might act as an E3 ubiquitin-protein ligase, or as part of E3 complex, which accepts ubiquitin from specific E2 ubiquitin-conjugating enzymes and then transfers it to substrates. The sequence is that of Ankyrin repeat and IBR domain-containing protein 1 (Ankib1) from Mus musculus (Mouse).